Here is a 348-residue protein sequence, read N- to C-terminus: tRNA N6-adenosine threonylcarbamoyltransferase (348 aa).

2 residues coordinate Fe cation: histidine 115 and histidine 119. Substrate contacts are provided by residues 137–141 (LASGG), aspartate 170, glycine 183, and asparagine 281. Position 309 (aspartate 309) interacts with Fe cation.

This sequence belongs to the KAE1 / TsaD family. Fe(2+) is required as a cofactor.

The protein resides in the cytoplasm. The catalysed reaction is L-threonylcarbamoyladenylate + adenosine(37) in tRNA = N(6)-L-threonylcarbamoyladenosine(37) in tRNA + AMP + H(+). Functionally, required for the formation of a threonylcarbamoyl group on adenosine at position 37 (t(6)A37) in tRNAs that read codons beginning with adenine. Is involved in the transfer of the threonylcarbamoyl moiety of threonylcarbamoyl-AMP (TC-AMP) to the N6 group of A37, together with TsaE and TsaB. TsaD likely plays a direct catalytic role in this reaction. This Methylobacterium sp. (strain 4-46) protein is tRNA N6-adenosine threonylcarbamoyltransferase.